Consider the following 441-residue polypeptide: Probable membrane metalloprotease ARASP2, chloroplastic (441 aa).

The transit peptide at methionine 1–glutamate 84 directs the protein to the chloroplast. Histidine 96 contacts Zn(2+). Glutamate 97 is an active-site residue. Histidine 100 contacts Zn(2+). A helical transmembrane segment spans residues valine 171 to threonine 191. The 54-residue stretch at valine 196–valine 249 folds into the PDZ domain. The next 2 helical transmembrane spans lie at leucine 373–leucine 393 and valine 407–isoleucine 427.

Belongs to the peptidase M50A family. The cofactor is Zn(2+).

It localises to the plastid. The protein resides in the chloroplast inner membrane. Functionally, metalloprotease essential for chloroplast and plant development. May be involved in regulated intramembrane proteolysis (RIP). The protein is Probable membrane metalloprotease ARASP2, chloroplastic of Arabidopsis thaliana (Mouse-ear cress).